Consider the following 221-residue polypeptide: Ribonuclease T (221 aa).

The 175-residue stretch at 21 to 195 (VVVDVETAGF…YDAEKTADLF (175 aa)) folds into the Exonuclease domain. Mg(2+) is bound by residues Asp24, Glu26, His182, and Asp187. His182 serves as the catalytic Proton donor/acceptor.

It belongs to the RNase T family. In terms of assembly, homodimer. Mg(2+) serves as cofactor.

Trims short 3' overhangs of a variety of RNA species, leaving a one or two nucleotide 3' overhang. Responsible for the end-turnover of tRNA: specifically removes the terminal AMP residue from uncharged tRNA (tRNA-C-C-A). Also appears to be involved in tRNA biosynthesis. This Marinobacter nauticus (strain ATCC 700491 / DSM 11845 / VT8) (Marinobacter aquaeolei) protein is Ribonuclease T.